A 250-amino-acid polypeptide reads, in one-letter code: tRNA pseudouridine synthase A (250 aa).

The active-site Nucleophile is Asp52. Tyr111 lines the substrate pocket.

It belongs to the tRNA pseudouridine synthase TruA family. In terms of assembly, homodimer.

It catalyses the reaction uridine(38/39/40) in tRNA = pseudouridine(38/39/40) in tRNA. Functionally, formation of pseudouridine at positions 38, 39 and 40 in the anticodon stem and loop of transfer RNAs. This Methylobacterium sp. (strain 4-46) protein is tRNA pseudouridine synthase A.